The following is a 479-amino-acid chain: U6 small nuclear RNA (adenine-(43)-N(6))-methyltransferase (479 aa).

Residues K82, G108, D131, T164, and N184 each contribute to the S-adenosyl-L-methionine site. Residues 420–424 (DNASQ) form an involved in dlc-1 binding region.

Belongs to the methyltransferase superfamily. METTL16/RlmF family. In terms of assembly, self-associates. Interacts with dlc-1; the interaction is direct, and is required for nuclear localization of mett-10. In terms of tissue distribution, expressed in the intestine, vulva, and cells of the somatic gonad including distal tip cells, gonadal sheath cells and spermatheca.

The protein resides in the nucleus. The catalysed reaction is an adenosine in mRNA + S-adenosyl-L-methionine = an N(6)-methyladenosine in mRNA + S-adenosyl-L-homocysteine + H(+). It carries out the reaction adenosine in U6 snRNA + S-adenosyl-L-methionine = N(6)-methyladenosine in U6 snRNA + S-adenosyl-L-homocysteine + H(+). Functionally, RNA N6-methyltransferase that methylates adenosine residues at the N(6) position of a subset of RNAs and is involved in S-adenosyl-L-methionine homeostasis by regulating splicing of S-adenosylmethionine synthase transcripts (sams-3, sams-4 and sams-5). Able to N6-methylate a subset of mRNAs containing the 5'UACAGAAAC-3' nonamer sequence. Plays a key role in S-adenosyl-L-methionine homeostasis: under rich-diet conditions, catalyzes N6-methylation of S-adenosylmethionine synthase mRNAs (sams-3, sams-4 and sams-5), directly inhibiting splicing and protein production of S-adenosylmethionine synthase. In addition to mRNAs, also able to mediate N6-methylation of U6 small nuclear RNA (U6 snRNA). Required for gamete production, inhibiting germ cell proliferative fate and ensuring germ cell meiotic development. Also promotes progression of the mitotic cell cycle in those germ cells that continue to proliferate. Plays a role in the development of the vulva, somatic gonad and embryo. The chain is U6 small nuclear RNA (adenine-(43)-N(6))-methyltransferase from Caenorhabditis elegans.